A 267-amino-acid polypeptide reads, in one-letter code: Thymidylate synthase (267 aa).

A dUMP-binding site is contributed by arginine 24. Position 54 (histidine 54) interacts with (6R)-5,10-methylene-5,6,7,8-tetrahydrofolate. Arginine 129 to arginine 130 is a binding site for dUMP. The Nucleophile role is filled by cysteine 149. DUMP-binding positions include arginine 169–aspartate 172, asparagine 180, and histidine 210–tyrosine 212. Residue aspartate 172 participates in (6R)-5,10-methylene-5,6,7,8-tetrahydrofolate binding. (6R)-5,10-methylene-5,6,7,8-tetrahydrofolate is bound at residue alanine 266.

Belongs to the thymidylate synthase family. Bacterial-type ThyA subfamily. In terms of assembly, homodimer.

It is found in the cytoplasm. It catalyses the reaction dUMP + (6R)-5,10-methylene-5,6,7,8-tetrahydrofolate = 7,8-dihydrofolate + dTMP. The protein operates within pyrimidine metabolism; dTTP biosynthesis. In terms of biological role, catalyzes the reductive methylation of 2'-deoxyuridine-5'-monophosphate (dUMP) to 2'-deoxythymidine-5'-monophosphate (dTMP) while utilizing 5,10-methylenetetrahydrofolate (mTHF) as the methyl donor and reductant in the reaction, yielding dihydrofolate (DHF) as a by-product. This enzymatic reaction provides an intracellular de novo source of dTMP, an essential precursor for DNA biosynthesis. The protein is Thymidylate synthase of Arthrobacter sp. (strain FB24).